The following is a 260-amino-acid chain: Salicylic acid-binding protein 2 (260 aa).

Salicylate-binding residues include Ala-13, Ser-81, and Lys-159. The Acyl-ester intermediate role is filled by Ser-81. Catalysis depends on charge relay system residues Asp-210 and His-238. His-238, Leu-253, and His-257 together coordinate salicylate.

This sequence belongs to the AB hydrolase superfamily. Methylesterase family.

The enzyme catalyses methyl salicylate + H2O = salicylate + methanol + H(+). Its pathway is plant hormone biosynthesis. With respect to regulation, esterase activity is down-regulated by salicylic acid (SA) or by tetraFA, a synthetic SA analog. Functionally, required to convert methyl salicylate (MeSA) to salicylic acid (SA) as part of the signal transduction pathways that activate systemic acquired resistance in systemic tissue. MeSA is believed to be an inactive form that needs to be demethylated to exert a biological effect. Also able to catalyze the conversion of acibenzolar-S-methyl into acibenzolar to induce systemic acquired resistance. The sequence is that of Salicylic acid-binding protein 2 from Nicotiana tabacum (Common tobacco).